The following is a 334-amino-acid chain: MSEFKGIPVSSGSVVERDGVRTIKDGVKRRDDGQGAVRRRKPQWLKARAPGGEGYRSVRGIVHDHHLSTVCEESHCPNLGECWSHGTATFMVLGSVCTRTCRFCSVDTGNPKGRLDPQEPEHCAESVRLMGLRYVVLTSVDRDDLPDGGAEHYAQCVRAIKADNPDTAVEALTPDFRGDEEAVRTVVDSGLEVFAHNVEVVRRLSPQVRDPRAGYEQSLAVLQVAKRLRPGVLTKSSLMVGLGETDAEIDEAFDDLLRAEVDIVTLGQYLQPTRNHLPVERFVSPDEFEALRQEGLRRGFREVVAGPLVRSSYRADRVLEGNNVGLPSVGPDVG.

[4Fe-4S] cluster-binding residues include C71, C76, C82, C97, C101, C104, and S312. The 219-residue stretch at 83 to 301 folds into the Radical SAM core domain; the sequence is WSHGTATFMV…RQEGLRRGFR (219 aa).

It belongs to the radical SAM superfamily. Lipoyl synthase family. [4Fe-4S] cluster serves as cofactor.

The protein localises to the cytoplasm. The catalysed reaction is [[Fe-S] cluster scaffold protein carrying a second [4Fe-4S](2+) cluster] + N(6)-octanoyl-L-lysyl-[protein] + 2 oxidized [2Fe-2S]-[ferredoxin] + 2 S-adenosyl-L-methionine + 4 H(+) = [[Fe-S] cluster scaffold protein] + N(6)-[(R)-dihydrolipoyl]-L-lysyl-[protein] + 4 Fe(3+) + 2 hydrogen sulfide + 2 5'-deoxyadenosine + 2 L-methionine + 2 reduced [2Fe-2S]-[ferredoxin]. It participates in protein modification; protein lipoylation via endogenous pathway; protein N(6)-(lipoyl)lysine from octanoyl-[acyl-carrier-protein]: step 2/2. Catalyzes the radical-mediated insertion of two sulfur atoms into the C-6 and C-8 positions of the octanoyl moiety bound to the lipoyl domains of lipoate-dependent enzymes, thereby converting the octanoylated domains into lipoylated derivatives. This chain is Lipoyl synthase, found in Halorhodospira halophila (strain DSM 244 / SL1) (Ectothiorhodospira halophila (strain DSM 244 / SL1)).